We begin with the raw amino-acid sequence, 486 residues long: MIQTVPDPAAHIKEALSVVSEDQSLFECAYGTPHLAKTEMTASSSSDYGQTSKMSPRVPQQDWLSQAPARVTIKMECNPSQVNGSRNSPDECSVNKGGKMVGSPDTVGMSYGSYMEEKHVPPPNMTTNERRVIVPADPTLWSTDHVRQWLEWAVKEYGLLDVDVLLFQNIDGKELCKMTKDDFQRLTPSYNADILLSHLHYLRETPLPHLTSDDVDKALQNSPRLMHARNTGGAAFIFPNTSVYPEATQRITTRPDLPYEPPRRSAWTGHSHLTPQSKAAQPSPSAVPKTEDQRPQLDPYQILGPTSSRLANPGSGQIQLWQFLLELLSDSSNSNCITWEGTNGEFKMTDPDEVARRWGERKSKPNMNYDKLSRALRYYYDKNIMTKVHGKRYAYKFDFHGIAQALQPHPPESSLYKYPSDLPYMGSYHAHPQKMNFVSPHPPALPVTSSSFFASPNPYWNSPTGGIYPNTRLPASHMPSHLGTYY.

The span at 41–54 (TASSSSDYGQTSKM) shows a compositional bias: polar residues. Disordered regions lie at residues 41 to 62 (TASS…PQQD) and 79 to 99 (PSQV…KGGK). Serine 55, serine 88, and serine 103 each carry phosphoserine. The 87-residue stretch at 120-206 (VPPPNMTTNE…SHLHYLRETP (87 aa)) folds into the PNT domain. The interval 249–311 (QRITTRPDLP…ILGPTSSRLA (63 aa)) is disordered. Residues 271–284 (SHLTPQSKAAQPSP) are compositionally biased toward polar residues. Lysine 289 is covalently cross-linked (Glycyl lysine isopeptide (Lys-Gly) (interchain with G-Cter in SUMO2)). The ETS DNA-binding region spans 318-398 (IQLWQFLLEL…HGKRYAYKFD (81 aa)).

Belongs to the ETS family. In terms of assembly, identified in a IGF2BP1-dependent mRNP granule complex containing untranslated mRNAs. Interacts with SETDB1.

It localises to the nucleus. Its subcellular location is the cytoplasm. Transcriptional regulator. May participate in transcriptional regulation through the recruitment of SETDB1 histone methyltransferase and subsequent modification of local chromatin structure. The polypeptide is Transcriptional regulator ERG (Erg) (Mus musculus (Mouse)).